We begin with the raw amino-acid sequence, 359 residues long: 3-isopropylmalate dehydrogenase (359 aa).

The substrate site is built by arginine 97, arginine 107, arginine 135, and aspartate 224. 3 residues coordinate Mg(2+): aspartate 224, aspartate 248, and aspartate 252. 282–294 serves as a coordination point for NAD(+); the sequence is GSAPDIAGKDIAN.

Belongs to the isocitrate and isopropylmalate dehydrogenases family. LeuB type 1 subfamily. Homodimer. Requires Mg(2+) as cofactor. Mn(2+) serves as cofactor.

The protein localises to the cytoplasm. The catalysed reaction is (2R,3S)-3-isopropylmalate + NAD(+) = 4-methyl-2-oxopentanoate + CO2 + NADH. It functions in the pathway amino-acid biosynthesis; L-leucine biosynthesis; L-leucine from 3-methyl-2-oxobutanoate: step 3/4. In terms of biological role, catalyzes the oxidation of 3-carboxy-2-hydroxy-4-methylpentanoate (3-isopropylmalate) to 3-carboxy-4-methyl-2-oxopentanoate. The product decarboxylates to 4-methyl-2 oxopentanoate. This Prochlorococcus marinus (strain NATL2A) protein is 3-isopropylmalate dehydrogenase.